Reading from the N-terminus, the 283-residue chain is Phosphate import ATP-binding protein PstB (283 aa).

Polar residues predominate over residues 1–20; that stretch reads MAQTLAQTKQISQSHTFDVS. The disordered stretch occupies residues 1–32; sequence MAQTLAQTKQISQSHTFDVSQSHHKTPDDTNS. One can recognise an ABC transporter domain in the interval 37-278; the sequence is YSTQNLDLWY…PSNKKTEDYI (242 aa). 69 to 76 is an ATP binding site; sequence GPSGCGKS.

Belongs to the ABC transporter superfamily. Phosphate importer (TC 3.A.1.7) family. The complex is composed of two ATP-binding proteins (PstB), two transmembrane proteins (PstC and PstA) and a solute-binding protein (PstS).

The protein localises to the cell membrane. The enzyme catalyses phosphate(out) + ATP + H2O = ADP + 2 phosphate(in) + H(+). Functionally, part of the ABC transporter complex PstSACB involved in phosphate import. Responsible for energy coupling to the transport system. This is Phosphate import ATP-binding protein PstB from Staphylococcus aureus (strain USA300).